The sequence spans 203 residues: Ribosome maturation factor RimP (203 aa).

The segment at 179 to 203 (VSSEGEDGGEARQAPKLNPKKPGKK) is disordered.

It belongs to the RimP family.

The protein localises to the cytoplasm. Required for maturation of 30S ribosomal subunits. The polypeptide is Ribosome maturation factor RimP (Gluconobacter oxydans (strain 621H) (Gluconobacter suboxydans)).